A 230-amino-acid polypeptide reads, in one-letter code: Large ribosomal subunit protein uL1 (230 aa).

It belongs to the universal ribosomal protein uL1 family. Part of the 50S ribosomal subunit.

Binds directly to 23S rRNA. The L1 stalk is quite mobile in the ribosome, and is involved in E site tRNA release. Its function is as follows. Protein L1 is also a translational repressor protein, it controls the translation of the L11 operon by binding to its mRNA. The chain is Large ribosomal subunit protein uL1 from Leuconostoc mesenteroides subsp. mesenteroides (strain ATCC 8293 / DSM 20343 / BCRC 11652 / CCM 1803 / JCM 6124 / NCDO 523 / NBRC 100496 / NCIMB 8023 / NCTC 12954 / NRRL B-1118 / 37Y).